The primary structure comprises 485 residues: Polyol:NADP oxidoreductase (485 aa).

It belongs to the mannitol dehydrogenase family.

The protein resides in the cytoplasm. The sequence is that of Polyol:NADP oxidoreductase (por) from Gluconobacter oxydans (strain 621H) (Gluconobacter suboxydans).